The following is a 36-amino-acid chain: Pancreatic polypeptide (36 aa).

Tyr36 carries the post-translational modification Tyrosine amide.

This sequence belongs to the NPY family.

The protein resides in the secreted. Hormone secreted by pancreatic cells that acts as a regulator of pancreatic and gastrointestinal functions probably by signaling through the G protein-coupled receptor NPY4R2. The sequence is that of Pancreatic polypeptide (PPY) from Ceratotherium simum (White rhinoceros).